The primary structure comprises 382 residues: Anhydro-N-acetylmuramic acid kinase (382 aa).

Residue 9–16 participates in ATP binding; that stretch reads GTSLDGID.

This sequence belongs to the anhydro-N-acetylmuramic acid kinase family.

The catalysed reaction is 1,6-anhydro-N-acetyl-beta-muramate + ATP + H2O = N-acetyl-D-muramate 6-phosphate + ADP + H(+). Its pathway is amino-sugar metabolism; 1,6-anhydro-N-acetylmuramate degradation. The protein operates within cell wall biogenesis; peptidoglycan recycling. Functionally, catalyzes the specific phosphorylation of 1,6-anhydro-N-acetylmuramic acid (anhMurNAc) with the simultaneous cleavage of the 1,6-anhydro ring, generating MurNAc-6-P. Is required for the utilization of anhMurNAc either imported from the medium or derived from its own cell wall murein, and thus plays a role in cell wall recycling. This chain is Anhydro-N-acetylmuramic acid kinase, found in Bacillus cereus (strain AH187).